Reading from the N-terminus, the 285-residue chain is Release factor glutamine methyltransferase (285 aa).

S-adenosyl-L-methionine-binding positions include 124 to 128 (GTGSG), aspartate 147, and asparagine 190. 190-193 (NPPY) serves as a coordination point for substrate.

This sequence belongs to the protein N5-glutamine methyltransferase family. PrmC subfamily.

It catalyses the reaction L-glutaminyl-[peptide chain release factor] + S-adenosyl-L-methionine = N(5)-methyl-L-glutaminyl-[peptide chain release factor] + S-adenosyl-L-homocysteine + H(+). In terms of biological role, methylates the class 1 translation termination release factors RF1/PrfA and RF2/PrfB on the glutamine residue of the universally conserved GGQ motif. In Flavobacterium psychrophilum (strain ATCC 49511 / DSM 21280 / CIP 103535 / JIP02/86), this protein is Release factor glutamine methyltransferase.